The chain runs to 57 residues: Large ribosomal subunit protein uL30 (57 aa).

It belongs to the universal ribosomal protein uL30 family. In terms of assembly, part of the 50S ribosomal subunit.

In Acholeplasma laidlawii (strain PG-8A), this protein is Large ribosomal subunit protein uL30.